The chain runs to 37 residues: Large ribosomal subunit protein bL36 (37 aa).

It belongs to the bacterial ribosomal protein bL36 family.

This chain is Large ribosomal subunit protein bL36, found in Desulforamulus reducens (strain ATCC BAA-1160 / DSM 100696 / MI-1) (Desulfotomaculum reducens).